A 940-amino-acid chain; its full sequence is UvrABC system protein A (940 aa).

Gly-33–Ser-40 is an ATP binding site. The C4-type zinc finger occupies Cys-252 to Cys-279. 2 consecutive ABC transporter domains span residues Trp-309–Leu-586 and Ile-606–Lys-935. Gly-639 to Ser-646 serves as a coordination point for ATP. A C4-type zinc finger spans residues Cys-738–Cys-764.

It belongs to the ABC transporter superfamily. UvrA family. Forms a heterotetramer with UvrB during the search for lesions.

It is found in the cytoplasm. In terms of biological role, the UvrABC repair system catalyzes the recognition and processing of DNA lesions. UvrA is an ATPase and a DNA-binding protein. A damage recognition complex composed of 2 UvrA and 2 UvrB subunits scans DNA for abnormalities. When the presence of a lesion has been verified by UvrB, the UvrA molecules dissociate. In Lactococcus lactis subsp. lactis (strain IL1403) (Streptococcus lactis), this protein is UvrABC system protein A.